The following is an 853-amino-acid chain: E3 ubiquitin-protein ligase RNF216 (853 aa).

Disordered stretches follow at residues 33 to 102, 125 to 152, and 165 to 228; these read TISD…DDIV, PLEVQNQSSEDSETELLSNPGEPAASVD, and PYFQ…AHPL. The span at 53–73 shows a compositional bias: acidic residues; sequence QQEDDLDDDVILTEDDSEDEY. Lysine 89 participates in a covalent cross-link: Glycyl lysine isopeptide (Lys-Gly) (interchain with G-Cter in SUMO2). Residues lysine 339 and lysine 342 each participate in a glycyl lysine isopeptide (Lys-Gly) (interchain with G-Cter in SUMO2) cross-link. Position 407 is a phosphoserine (serine 407). Residues lysine 413, lysine 418, lysine 436, lysine 447, and lysine 473 each participate in a glycyl lysine isopeptide (Lys-Gly) (interchain with G-Cter in SUMO2) cross-link. A coiled-coil region spans residues 463–479; the sequence is VKQEQEFYEQKIKEMAE. The segment at 499–716 is TRIAD supradomain; sequence QLIECRCCYG…SPGAPCQECS (218 aa). Cysteine 503, cysteine 506, cysteine 525, cysteine 528, cysteine 593, and cysteine 596 together coordinate Zn(2+). The segment at 503 to 552 adopts an RING-type 1 zinc-finger fold; sequence CRCCYGEFPFEELTQCADAHLFCKECLIRYAQEAVFGSGKSELSCMEGSC. An IBR-type zinc finger spans residues 571–636; that stretch reads YKYYERKAEE…LWKEHNGLTC (66 aa). Lysine 607 participates in a covalent cross-link: Glycyl lysine isopeptide (Lys-Gly) (interchain with G-Cter in SUMO2). Positions 611, 616, 621, 624, 631, and 636 each coordinate Zn(2+). Residues lysine 646 and lysine 654 each participate in a glycyl lysine isopeptide (Lys-Gly) (interchain with G-Cter in SUMO2) cross-link. Cysteine 663 and cysteine 666 together coordinate Zn(2+). An RING-type 2; atypical zinc finger spans residues 663-691; that stretch reads CHKCGTGLIKSEGCNRMSCRCGAQMCYLC. Residue cysteine 676 is part of the active site. Zn(2+)-binding residues include cysteine 681, cysteine 683, cysteine 688, cysteine 691, histidine 704, and cysteine 712. Positions 725 to 751 form a coiled coil; that stretch reads TEDDEKLIEEIQKEAEEEQKRKNGENT. Glycyl lysine isopeptide (Lys-Gly) (interchain with G-Cter in SUMO2) cross-links involve residues lysine 753 and lysine 761.

Interacts with UBE2L3 and to some extent with UBE2L6. Interacts with TRAF3, TLR3, TLR4, TLR5 and TLR9. Isoform 3/ZIN binds RIPK1. Post-translationally, auto-ubiquitinated. Phosphorylation at Ser-719 enhances acceptor ubiquitin binding and chain-type specificity towards 'Lys-63' di-ubiquitin but not di-ubiquitin with other linkage types.

Its subcellular location is the cytoplasm. The protein localises to the cytoplasmic vesicle. It localises to the clathrin-coated vesicle. It carries out the reaction S-ubiquitinyl-[E2 ubiquitin-conjugating enzyme]-L-cysteine + [acceptor protein]-L-lysine = [E2 ubiquitin-conjugating enzyme]-L-cysteine + N(6)-ubiquitinyl-[acceptor protein]-L-lysine.. Its pathway is protein modification; protein ubiquitination. With respect to regulation, allosterically activated by 'Lys-63'-linked di-ubiquitin. In terms of biological role, E3 ubiquitin ligase which accepts ubiquitin from specific E2 ubiquitin-conjugating enzymes, and then transfers it to substrates promoting their ubiquitination. Plays a role in the regulation of antiviral responses by promoting the degradation of TRAF3, TLR4 and TLR9. In turn, down-regulates NF-kappa-B and IRF3 activation as well as beta interferon production. Also participates in the regulation of autophagy by ubiquitinating BECN1 leading to its degradation and autophagy inhibition. Plays a role in ARC-dependent synaptic plasticity by mediating ARC ubiquitination resulting in its rapid proteasomal degradation. Plays aso an essential role in spermatogenesis and male fertility. Mechanistically, regulates meiosis by promoting the degradation of PRKACB through the ubiquitin-mediated lysosome pathway. Modulates the gonadotropin-releasing hormone signal pathway by affecting the stability of STAU2 that is required for the microtubule-dependent transport of neuronal RNA from the cell body to the dendrite. In Mus musculus (Mouse), this protein is E3 ubiquitin-protein ligase RNF216 (Rnf216).